Consider the following 248-residue polypeptide: MFQKVEGIVIRTTDYGETNKIVTIFSRELGKVSAMARGSKKPKSRLASVSQLMTHGHFLIQMGSGLGTLQQGEIISTMKEIREDIFLTAYASFIVELTDKATEDKKHNPYLFEMLYQTLHYMCEGVDPEVLSLIYQTKMLPVLGMRPYFDTCAICHQETDFVAFSVREGGFLCSRHAEQDPYRIPVGEAVHKLLRLFFHFDLHRLGNVSVKDSTKKQMRLVLNTYYDEYCGIYLKSRRFLEQLDKFQI.

This sequence belongs to the RecO family.

Functionally, involved in DNA repair and RecF pathway recombination. This chain is DNA repair protein RecO, found in Bacillus cereus (strain B4264).